Reading from the N-terminus, the 398-residue chain is Gastric triacylglycerol lipase (398 aa).

The signal sequence occupies residues 1-19 (MWLLLTMASLISVLGTTHG). N34 and N99 each carry an N-linked (GlcNAc...) asparagine glycan. An AB hydrolase-1 domain is found at 78–377 (PVVFLQHGLL…PFYNHLDFIW (300 aa)). S172 (nucleophile) is an active-site residue. A disulfide bond links C246 and C255. N271 and N327 each carry an N-linked (GlcNAc...) asparagine glycan. Residues D343 and H372 each act as charge relay system in the active site.

The protein belongs to the AB hydrolase superfamily. Lipase family.

The protein resides in the secreted. The enzyme catalyses a triacylglycerol + H2O = a diacylglycerol + a fatty acid + H(+). The catalysed reaction is 1,2,3-tri-(9Z-octadecenoyl)-glycerol + H2O = 1,2-di-(9Z-octadecenoyl)-sn-glycerol + (9Z)-octadecenoate + H(+). It carries out the reaction 1,2,3-trioctanoylglycerol + H2O = 1,2-dioctanoyl-sn-glycerol + octanoate + H(+). Its function is as follows. Catalyzes the hydrolysis of triacylglycerols to yield free fatty acids, diacylglycerol, monoacylglycerol, and glycerol. Shows a preferential hydrolysis at the sn-3 position of triacylglycerol. This is Gastric triacylglycerol lipase (LIPF) from Homo sapiens (Human).